The primary structure comprises 509 residues: Lanosterol 14-alpha demethylase (509 aa).

Residues 30–50 (GNLLSMLLIACAFTLSLVYLF) traverse the membrane as a helical segment. C455 contributes to the heme binding site.

Belongs to the cytochrome P450 family. It depends on heme as a cofactor. In terms of processing, ubiquitinated by MARCHF6, leading to proteasomal degradation.

The protein resides in the endoplasmic reticulum membrane. It is found in the microsome membrane. It catalyses the reaction a 14alpha-methyl steroid + 3 reduced [NADPH--hemoprotein reductase] + 3 O2 = a Delta(14) steroid + formate + 3 oxidized [NADPH--hemoprotein reductase] + 4 H2O + 4 H(+). It carries out the reaction lanosterol + 3 reduced [NADPH--hemoprotein reductase] + 3 O2 = 4,4-dimethyl-5alpha-cholesta-8,14,24-trien-3beta-ol + formate + 3 oxidized [NADPH--hemoprotein reductase] + 4 H2O + 4 H(+). The enzyme catalyses 24,25-dihydrolanosterol + 3 reduced [NADPH--hemoprotein reductase] + 3 O2 = 4,4-dimethyl-8,14-cholestadien-3beta-ol + formate + 3 oxidized [NADPH--hemoprotein reductase] + 4 H2O + 4 H(+). The catalysed reaction is a 14alpha-methyl steroid + reduced [NADPH--hemoprotein reductase] + O2 = a 14alpha-hydroxymethyl steroid + oxidized [NADPH--hemoprotein reductase] + H2O + H(+). It catalyses the reaction a 14alpha-hydroxymethyl steroid + reduced [NADPH--hemoprotein reductase] + O2 = a 14alpha-formyl steroid + oxidized [NADPH--hemoprotein reductase] + 2 H2O + H(+). It carries out the reaction a 14alpha-formyl steroid + reduced [NADPH--hemoprotein reductase] + O2 = a Delta(14) steroid + formate + oxidized [NADPH--hemoprotein reductase] + H2O + 2 H(+). The enzyme catalyses lanosterol + reduced [NADPH--hemoprotein reductase] + O2 = 32-hydroxylanosterol + oxidized [NADPH--hemoprotein reductase] + H2O + H(+). The catalysed reaction is 32-hydroxylanosterol + reduced [NADPH--hemoprotein reductase] + O2 = 32-oxolanosterol + oxidized [NADPH--hemoprotein reductase] + 2 H2O + H(+). It catalyses the reaction 32-oxolanosterol + reduced [NADPH--hemoprotein reductase] + O2 = 4,4-dimethyl-5alpha-cholesta-8,14,24-trien-3beta-ol + formate + oxidized [NADPH--hemoprotein reductase] + H2O + 2 H(+). It carries out the reaction 24,25-dihydrolanosterol + reduced [NADPH--hemoprotein reductase] + O2 = 32-hydroxy-24,25-dihydrolanosterol + oxidized [NADPH--hemoprotein reductase] + H2O + H(+). The enzyme catalyses 32-hydroxy-24,25-dihydrolanosterol + reduced [NADPH--hemoprotein reductase] + O2 = 32-oxo-24,25-dihydrolanosterol + oxidized [NADPH--hemoprotein reductase] + 2 H2O + H(+). The catalysed reaction is 32-oxo-24,25-dihydrolanosterol + reduced [NADPH--hemoprotein reductase] + O2 = 4,4-dimethyl-8,14-cholestadien-3beta-ol + formate + oxidized [NADPH--hemoprotein reductase] + H2O + 2 H(+). The protein operates within steroid biosynthesis; zymosterol biosynthesis; zymosterol from lanosterol: step 1/6. Its activity is regulated as follows. Inhibited by azalanstat. Inhibited by azole antifungal agents ketoconazole, itraconazole and fluconazole. Its function is as follows. Sterol 14alpha-demethylase that plays a critical role in the cholesterol biosynthesis pathway, being cholesterol the major sterol component in mammalian membranes as well as a precursor for bile acid and steroid hormone synthesis. Cytochrome P450 monooxygenase that catalyzes the three-step oxidative removal of the 14alpha-methyl group (C-32) of sterols such as lanosterol (lanosta-8,24-dien-3beta-ol) and 24,25-dihydrolanosterol (DHL) in the form of formate, and converts the sterols to 4,4-dimethyl-5alpha-cholesta-8,14,24-trien-3beta-ol and 4,4-dimethyl-8,14-cholestadien-3beta-ol, respectively, which are intermediates of cholesterol biosynthesis. Can also demethylate substrates not intrinsic to mammals, such as eburicol (24-methylene-24,25-dihydrolanosterol), but at a lower rate than DHL. This chain is Lanosterol 14-alpha demethylase, found in Pongo abelii (Sumatran orangutan).